We begin with the raw amino-acid sequence, 55 residues long: MRLAIILLLMTTIVLTIGSPLHGAKCSSSNQCTRPCRYGGGTHGKCMNGRCRCYG.

The first 18 residues, 1 to 18, serve as a signal peptide directing secretion; that stretch reads MRLAIILLLMTTIVLTIG. Cystine bridges form between Cys26–Cys46, Cys32–Cys51, and Cys36–Cys53.

This sequence belongs to the short scorpion toxin superfamily. Potassium channel inhibitor family. Alpha-KTx 12 subfamily. Expressed by the venom gland.

Its subcellular location is the secreted. Its function is as follows. Blocks mouse voltage-gated potassium channels Kv1.3/KCNA3 (IC(50)=0.3-30 nM), when the channel is expressed in Jurkat T cells or in HEK293 cells. Also shows a weaker inhibition on mKv1.2/KCNA2 (IC(50)=56.9 nM) and mKv1.1/KCNA1 (IC(50)=485 nM). Probably through the inhibition of both Kv1.2/KCNA2 and Kv1.3/KCNA3, the toxin also reduces the free calcium concentration in Jurkat T cells, inhibits the activation of Jurkat T cells and reduces the release of inflammatory cytokines interleukin-2, showing a strong immunosuppressant effect. This Scorpiops pococki (Scorpion) protein is Potassium channel toxin alpha-KTX 12 Sp2.